A 119-amino-acid polypeptide reads, in one-letter code: Large ribosomal subunit protein bL20 (119 aa).

This sequence belongs to the bacterial ribosomal protein bL20 family.

Binds directly to 23S ribosomal RNA and is necessary for the in vitro assembly process of the 50S ribosomal subunit. It is not involved in the protein synthesizing functions of that subunit. The sequence is that of Large ribosomal subunit protein bL20 from Albidiferax ferrireducens (strain ATCC BAA-621 / DSM 15236 / T118) (Rhodoferax ferrireducens).